The following is an 842-amino-acid chain: Homeobox-leucine zipper protein REVOLUTA (842 aa).

A disordered region spans residues 1-20; sequence MEMAVANHRERSSDSMNRHL. Residues 7-20 are compositionally biased toward basic and acidic residues; it reads NHRERSSDSMNRHL. The segment at residues 22 to 85 is a DNA-binding region (homeobox); it reads SSGKYVRYTA…NRRCRDKQRK (64 aa). Positions 90–121 form a coiled coil; that stretch reads LQSVNRKLSAMNKLLMEENDRLQKQVSQLVCE. The region spanning 151 to 379 is the START domain; sequence DANSPAGLLS…LAQESNGEVV (229 aa).

It belongs to the HD-ZIP homeobox family. Class III subfamily. Homodimer. Heterodimer with ZPR1, ZPR2, ZPR3 or ZPR4. Interacts with ESR1 and ESR2. Interacts with ZPR1, ZPR2, ZPR3 and ZPR4. Heterodimerization with ZPR3 prevents DNA binding by REV. In terms of tissue distribution, expressed in the interfascicular regions of stem and vascular bundles of young roots and leaves.

It localises to the nucleus. Its function is as follows. Probable transcription factor involved in the regulation of interfascicular fiber (cortical cells) and secondary xylem differentiation in the inflorescence stems. Required for lateral shoot meristems (LSMs) and flower meristems (FMs) initiation. May be involved in the determination of vascular patterning and organ polarity. Directly regulates the expression of AGO10, ZPR1, ZPR2, ZPR3 and ZPR4. Required to regulate adaxial-abaxial polarity and leaf axial patterning. In Arabidopsis thaliana (Mouse-ear cress), this protein is Homeobox-leucine zipper protein REVOLUTA.